Here is a 200-residue protein sequence, read N- to C-terminus: Recombination protein RecR (200 aa).

The C4-type zinc-finger motif lies at 58-75; sequence CSNCFCLKISQTSPCNFC. In terms of domain architecture, Toprim spans 82-177; that stretch reads SSLCIVATPK…KISRLALGMP (96 aa).

The protein belongs to the RecR family.

Its function is as follows. May play a role in DNA repair. It seems to be involved in an RecBC-independent recombinational process of DNA repair. It may act with RecF and RecO. This is Recombination protein RecR from Chlamydia trachomatis serovar L2 (strain ATCC VR-902B / DSM 19102 / 434/Bu).